A 101-amino-acid chain; its full sequence is Ubiquitin-related modifier 1 (101 aa).

Gly101 carries the post-translational modification 1-thioglycine. Residue Gly101 forms a Glycyl lysine isopeptide (Gly-Lys) (interchain with K-? in acceptor proteins) linkage.

The protein belongs to the URM1 family. Post-translationally, C-terminal thiocarboxylation occurs in 2 steps, it is first acyl-adenylated (-COAMP) via the hesA/moeB/thiF part of UBA4, then thiocarboxylated (-COSH) via the rhodanese domain of UBA4.

Its subcellular location is the cytoplasm. It participates in tRNA modification; 5-methoxycarbonylmethyl-2-thiouridine-tRNA biosynthesis. Acts as a sulfur carrier required for 2-thiolation of mcm(5)S(2)U at tRNA wobble positions of cytosolic tRNA(Lys), tRNA(Glu) and tRNA(Gln). Serves as sulfur donor in tRNA 2-thiolation reaction by being thiocarboxylated (-COSH) at its C-terminus by the MOCS3 homolog UBA4. The sulfur is then transferred to tRNA to form 2-thiolation of mcm(5)S(2)U. Prior mcm(5) tRNA modification by the elongator complex is required for 2-thiolation. Also acts as a ubiquitin-like protein (UBL) that is covalently conjugated via an isopeptide bond to lysine residues of target proteins such as AHP1. The thiocarboxylated form serves as substrate for conjugation and oxidative stress specifically induces the formation of UBL-protein conjugates. This is Ubiquitin-related modifier 1 from Kluyveromyces lactis (strain ATCC 8585 / CBS 2359 / DSM 70799 / NBRC 1267 / NRRL Y-1140 / WM37) (Yeast).